A 254-amino-acid polypeptide reads, in one-letter code: Ribosomal RNA small subunit methyltransferase G (254 aa).

S-adenosyl-L-methionine is bound by residues G84, F89, 136 to 137, and R155; that span reads VE.

Belongs to the methyltransferase superfamily. RNA methyltransferase RsmG family.

It localises to the cytoplasm. Its function is as follows. Specifically methylates the N7 position of a guanine in 16S rRNA. In Synechococcus sp. (strain CC9311), this protein is Ribosomal RNA small subunit methyltransferase G.